The sequence spans 265 residues: Phosphonoacetaldehyde hydrolase (265 aa).

The active-site Nucleophile is Asp10. Mg(2+)-binding residues include Asp10 and Ala12. Lys51 acts as the Schiff-base intermediate with substrate in catalysis. Residue Asp184 coordinates Mg(2+).

It belongs to the HAD-like hydrolase superfamily. PhnX family. In terms of assembly, homodimer. Mg(2+) serves as cofactor.

The catalysed reaction is phosphonoacetaldehyde + H2O = acetaldehyde + phosphate + H(+). In terms of biological role, involved in phosphonate degradation. The chain is Phosphonoacetaldehyde hydrolase from Latilactobacillus sakei subsp. sakei (strain 23K) (Lactobacillus sakei subsp. sakei).